The chain runs to 117 residues: Large ribosomal subunit protein uL22 (117 aa).

The protein belongs to the universal ribosomal protein uL22 family. Part of the 50S ribosomal subunit.

Functionally, this protein binds specifically to 23S rRNA; its binding is stimulated by other ribosomal proteins, e.g. L4, L17, and L20. It is important during the early stages of 50S assembly. It makes multiple contacts with different domains of the 23S rRNA in the assembled 50S subunit and ribosome. Its function is as follows. The globular domain of the protein is located near the polypeptide exit tunnel on the outside of the subunit, while an extended beta-hairpin is found that lines the wall of the exit tunnel in the center of the 70S ribosome. This is Large ribosomal subunit protein uL22 from Latilactobacillus sakei subsp. sakei (strain 23K) (Lactobacillus sakei subsp. sakei).